Reading from the N-terminus, the 470-residue chain is Siroheme synthase (470 aa).

Residues 1–203 are precorrin-2 dehydrogenase /sirohydrochlorin ferrochelatase; sequence MEFFPIFLKL…GDEAAARAEM (203 aa). NAD(+)-binding positions include 22-23 and 43-44; these read EV and PE. At Ser-128 the chain carries Phosphoserine. Residues 216 to 470 form a uroporphyrinogen-III C-methyltransferase region; the sequence is GAVYLVGAGP…ENSAVTIQED (255 aa). Pro-225 serves as a coordination point for S-adenosyl-L-methionine. Asp-248 acts as the Proton acceptor in catalysis. Residue Lys-270 is the Proton donor of the active site. S-adenosyl-L-methionine-binding positions include 301-303, Met-383, and Ala-412; that span reads GGD.

The protein in the N-terminal section; belongs to the precorrin-2 dehydrogenase / sirohydrochlorin ferrochelatase family. This sequence in the C-terminal section; belongs to the precorrin methyltransferase family.

The enzyme catalyses uroporphyrinogen III + 2 S-adenosyl-L-methionine = precorrin-2 + 2 S-adenosyl-L-homocysteine + H(+). The catalysed reaction is precorrin-2 + NAD(+) = sirohydrochlorin + NADH + 2 H(+). It carries out the reaction siroheme + 2 H(+) = sirohydrochlorin + Fe(2+). It participates in cofactor biosynthesis; adenosylcobalamin biosynthesis; precorrin-2 from uroporphyrinogen III: step 1/1. The protein operates within cofactor biosynthesis; adenosylcobalamin biosynthesis; sirohydrochlorin from precorrin-2: step 1/1. It functions in the pathway porphyrin-containing compound metabolism; siroheme biosynthesis; precorrin-2 from uroporphyrinogen III: step 1/1. Its pathway is porphyrin-containing compound metabolism; siroheme biosynthesis; siroheme from sirohydrochlorin: step 1/1. It participates in porphyrin-containing compound metabolism; siroheme biosynthesis; sirohydrochlorin from precorrin-2: step 1/1. Multifunctional enzyme that catalyzes the SAM-dependent methylations of uroporphyrinogen III at position C-2 and C-7 to form precorrin-2 via precorrin-1. Then it catalyzes the NAD-dependent ring dehydrogenation of precorrin-2 to yield sirohydrochlorin. Finally, it catalyzes the ferrochelation of sirohydrochlorin to yield siroheme. This chain is Siroheme synthase, found in Chromobacterium violaceum (strain ATCC 12472 / DSM 30191 / JCM 1249 / CCUG 213 / NBRC 12614 / NCIMB 9131 / NCTC 9757 / MK).